A 393-amino-acid polypeptide reads, in one-letter code: Cysteine desulfurase (393 aa).

Residues 76-77, asparagine 155, glutamine 183, and 203-205 contribute to the pyridoxal 5'-phosphate site; these read GT and SAH. Lysine 206 is subject to N6-(pyridoxal phosphate)lysine. Threonine 241 is a pyridoxal 5'-phosphate binding site. The active-site Cysteine persulfide intermediate is the cysteine 328. Residue cysteine 328 coordinates [2Fe-2S] cluster.

This sequence belongs to the class-V pyridoxal-phosphate-dependent aminotransferase family. NifS/IscS subfamily. As to quaternary structure, homodimer. Requires pyridoxal 5'-phosphate as cofactor.

The catalysed reaction is (sulfur carrier)-H + L-cysteine = (sulfur carrier)-SH + L-alanine. Its function is as follows. Catalyzes the removal of elemental sulfur atoms from cysteine to produce alanine. Seems to participate in the biosynthesis of the nitrogenase metalloclusters by providing the inorganic sulfur required for the Fe-S core formation. This is Cysteine desulfurase from Bradyrhizobium diazoefficiens (strain JCM 10833 / BCRC 13528 / IAM 13628 / NBRC 14792 / USDA 110).